The following is a 250-amino-acid chain: Urease accessory protein UreF (250 aa).

The interval 1–21 (MDEADPGEAEAAQAEAAQDGA) is disordered. A compositionally biased stretch (low complexity) spans 9-21 (AEAAQAEAAQDGA).

This sequence belongs to the UreF family. As to quaternary structure, ureD, UreF and UreG form a complex that acts as a GTP-hydrolysis-dependent molecular chaperone, activating the urease apoprotein by helping to assemble the nickel containing metallocenter of UreC. The UreE protein probably delivers the nickel.

Its subcellular location is the cytoplasm. Functionally, required for maturation of urease via the functional incorporation of the urease nickel metallocenter. The polypeptide is Urease accessory protein UreF (Methylobacterium sp. (strain 4-46)).